The chain runs to 190 residues: Potassium-transporting ATPase KdpC subunit (190 aa).

A helical transmembrane segment spans residues 10 to 30 (TFIFLLLITGGVYPLLTTVLG).

It belongs to the KdpC family. The system is composed of three essential subunits: KdpA, KdpB and KdpC.

It localises to the cell inner membrane. Part of the high-affinity ATP-driven potassium transport (or Kdp) system, which catalyzes the hydrolysis of ATP coupled with the electrogenic transport of potassium into the cytoplasm. This subunit acts as a catalytic chaperone that increases the ATP-binding affinity of the ATP-hydrolyzing subunit KdpB by the formation of a transient KdpB/KdpC/ATP ternary complex. This is Potassium-transporting ATPase KdpC subunit from Escherichia coli O139:H28 (strain E24377A / ETEC).